The sequence spans 122 residues: Riboflavin kinase (122 aa).

4 to 9 (GFGEGA) is a binding site for CDP. Thr-33 and Asn-35 together coordinate Mg(2+). Positions 84 and 92 each coordinate FMN. Residue 97–100 (VNLR) participates in CDP binding.

The protein belongs to the archaeal riboflavin kinase family. Mg(2+) is required as a cofactor.

It carries out the reaction riboflavin + CTP = CDP + FMN + H(+). The protein operates within cofactor biosynthesis; FMN biosynthesis; FMN from riboflavin (CTP route): step 1/1. Its function is as follows. Catalyzes the CTP-dependent phosphorylation of riboflavin (vitamin B2) to form flavin mononucleotide (FMN). This chain is Riboflavin kinase, found in Methanothermobacter thermautotrophicus (strain ATCC 29096 / DSM 1053 / JCM 10044 / NBRC 100330 / Delta H) (Methanobacterium thermoautotrophicum).